The sequence spans 469 residues: Glutamate--tRNA ligase (469 aa).

Residues 9–19 carry the 'HIGH' region motif; that stretch reads PSPTGFLHVGG. 4 residues coordinate Zn(2+): C98, C100, C125, and D127. Positions 236–240 match the 'KMSKS' region motif; the sequence is KLSKR. ATP is bound at residue K239.

The protein belongs to the class-I aminoacyl-tRNA synthetase family. Glutamate--tRNA ligase type 1 subfamily. As to quaternary structure, monomer. It depends on Zn(2+) as a cofactor.

The protein resides in the cytoplasm. The catalysed reaction is tRNA(Glu) + L-glutamate + ATP = L-glutamyl-tRNA(Glu) + AMP + diphosphate. Catalyzes the attachment of glutamate to tRNA(Glu) in a two-step reaction: glutamate is first activated by ATP to form Glu-AMP and then transferred to the acceptor end of tRNA(Glu). This Shewanella sp. (strain MR-4) protein is Glutamate--tRNA ligase.